We begin with the raw amino-acid sequence, 194 residues long: MLQPNMPAPNFSGQAVVGKEFETISLSDYKGKWVILAFYPLDFTFVCPTEIIAISDQMEQFAQRNCAVIFCSTDSVYSHLQWTKMDRKVGGIGQLNFPLLADKNMSVSRAFGVLDEEQGNTYRGNFLIDPKGVLRQITVNDDPVGRSVEEALRLLDAFIFHEEHGEVCPANWKPKSKTIVPTPDGSKAYFSSAN.

Residues 2-160 (LQPNMPAPNF…ALRLLDAFIF (159 aa)) enclose the Thioredoxin domain. Cysteine 47 serves as the catalytic Cysteine sulfenic acid (-SOH) intermediate.

It belongs to the peroxiredoxin family. AhpC/Prx1 subfamily. In terms of assembly, homodimer; disulfide-linked, upon oxidation.

It carries out the reaction a hydroperoxide + [thioredoxin]-dithiol = an alcohol + [thioredoxin]-disulfide + H2O. Functionally, antioxidant. Could be involved in protection against reactive oxygen species (ROS) generated by metabolic processes and/or protection of the parasite against ROS released by immune effector cells. Thiol-specific peroxidase that catalyzes the reduction of hydrogen peroxide and organic hydroperoxides to water and alcohols, respectively. Plays a role in cell protection against oxidative stress by detoxifying peroxides and as sensor of hydrogen peroxide-mediated signaling events. This is Thioredoxin peroxidase from Fasciola hepatica (Liver fluke).